Consider the following 230-residue polypeptide: Cytochrome b6-f complex iron-sulfur subunit, chloroplastic (230 aa).

A chloroplast-targeting transit peptide spans 1–51; sequence MASFTLSSATPSQLCSSKNGMFAPSLALAKAGRVNVLISKERIRGMKLTCQ. The helical transmembrane segment at 73 to 93 threads the bilayer; sequence LLGALSLPTGYMLLPYASFFV. Residues 116–212 form the Rieske domain; the sequence is AAEWLKTHAP…CDVDDGKVVF (97 aa). [2Fe-2S] cluster-binding residues include cysteine 158, histidine 160, cysteine 176, and histidine 179. A disulfide bond links cysteine 163 and cysteine 178.

It belongs to the Rieske iron-sulfur protein family. In terms of assembly, the 4 large subunits of the cytochrome b6-f complex are cytochrome b6, subunit IV (17 kDa polypeptide, petD), cytochrome f and the Rieske protein, while the 4 small subunits are petG, petL, petM and petN. The complex functions as a dimer. The cofactor is [2Fe-2S] cluster.

The protein localises to the plastid. The protein resides in the chloroplast thylakoid membrane. The catalysed reaction is 2 oxidized [plastocyanin] + a plastoquinol + 2 H(+)(in) = 2 reduced [plastocyanin] + a plastoquinone + 4 H(+)(out). Its function is as follows. Component of the cytochrome b6-f complex, which mediates electron transfer between photosystem II (PSII) and photosystem I (PSI), cyclic electron flow around PSI, and state transitions. The protein is Cytochrome b6-f complex iron-sulfur subunit, chloroplastic (petC) of Spinacia oleracea (Spinach).